A 148-amino-acid polypeptide reads, in one-letter code: Deoxyuridine 5'-triphosphate nucleotidohydrolase (148 aa).

Residues arginine 68–glycine 70, asparagine 81, threonine 85–aspartate 87, and lysine 95 contribute to the substrate site.

The protein belongs to the dUTPase family. The cofactor is Mg(2+).

It catalyses the reaction dUTP + H2O = dUMP + diphosphate + H(+). Its pathway is pyrimidine metabolism; dUMP biosynthesis; dUMP from dCTP (dUTP route): step 2/2. Its function is as follows. This enzyme is involved in nucleotide metabolism: it produces dUMP, the immediate precursor of thymidine nucleotides and it decreases the intracellular concentration of dUTP so that uracil cannot be incorporated into DNA. In Rickettsia canadensis (strain McKiel), this protein is Deoxyuridine 5'-triphosphate nucleotidohydrolase.